The chain runs to 283 residues: Large ribosomal subunit protein uL2 (283 aa).

The tract at residues 215–283 (RHKGIRPTVR…IRGRKKRINN (69 aa)) is disordered. Positions 274 to 283 (IRGRKKRINN) are enriched in basic residues.

This sequence belongs to the universal ribosomal protein uL2 family. As to quaternary structure, part of the 50S ribosomal subunit. Forms a bridge to the 30S subunit in the 70S ribosome.

In terms of biological role, one of the primary rRNA binding proteins. Required for association of the 30S and 50S subunits to form the 70S ribosome, for tRNA binding and peptide bond formation. It has been suggested to have peptidyltransferase activity; this is somewhat controversial. Makes several contacts with the 16S rRNA in the 70S ribosome. The chain is Large ribosomal subunit protein uL2 from Mycoplasma mobile (strain ATCC 43663 / 163K / NCTC 11711) (Mesomycoplasma mobile).